The sequence spans 249 residues: Probable septum site-determining protein MinC (249 aa).

Positions 115 to 141 (KPAQEAPAQAEPEAAAAPEPANEPAPA) are disordered. Over residues 118–141 (QEAPAQAEPEAAAAPEPANEPAPA) the composition is skewed to low complexity.

It belongs to the MinC family. As to quaternary structure, interacts with MinD and FtsZ.

Functionally, cell division inhibitor that blocks the formation of polar Z ring septums. Rapidly oscillates between the poles of the cell to destabilize FtsZ filaments that have formed before they mature into polar Z rings. Prevents FtsZ polymerization. The sequence is that of Probable septum site-determining protein MinC from Marinobacter nauticus (strain ATCC 700491 / DSM 11845 / VT8) (Marinobacter aquaeolei).